The primary structure comprises 300 residues: Bifunctional protein FolD (300 aa).

NADP(+)-binding positions include 172 to 174 (GRS), S206, and I247.

This sequence belongs to the tetrahydrofolate dehydrogenase/cyclohydrolase family. In terms of assembly, homodimer.

It catalyses the reaction (6R)-5,10-methylene-5,6,7,8-tetrahydrofolate + NADP(+) = (6R)-5,10-methenyltetrahydrofolate + NADPH. The catalysed reaction is (6R)-5,10-methenyltetrahydrofolate + H2O = (6R)-10-formyltetrahydrofolate + H(+). It participates in one-carbon metabolism; tetrahydrofolate interconversion. Catalyzes the oxidation of 5,10-methylenetetrahydrofolate to 5,10-methenyltetrahydrofolate and then the hydrolysis of 5,10-methenyltetrahydrofolate to 10-formyltetrahydrofolate. This chain is Bifunctional protein FolD, found in Rhodopirellula baltica (strain DSM 10527 / NCIMB 13988 / SH1).